Consider the following 141-residue polypeptide: Secreted RxLR effector protein 69 (141 aa).

Positions 1–19 (MHSSTILFVLGAAILAVNG) are cleaved as a signal peptide. The RxLR-dEER signature appears at 38 to 53 (RLLRSNLMKHETGEER). An N-linked (GlcNAc...) asparagine glycan is attached at Asn-120.

Belongs to the RxLR effector family.

It is found in the secreted. The protein resides in the host nucleus. Its function is as follows. Secreted effector that completely suppresses the host cell death induced by cell death-inducing proteins. In Plasmopara viticola (Downy mildew of grapevine), this protein is Secreted RxLR effector protein 69.